The chain runs to 276 residues: Octanoyltransferase LipM (276 aa).

The 216-residue stretch at 32–247 folds into the BPL/LPL catalytic domain; the sequence is GEVAPTLRFY…GFEDALQLTF (216 aa). Residue cysteine 149 is the Acyl-thioester intermediate of the active site.

The protein belongs to the octanoyltransferase LipM family. In terms of assembly, monomer.

The catalysed reaction is octanoyl-[ACP] + L-lysyl-[protein] = N(6)-octanoyl-L-lysyl-[protein] + holo-[ACP] + H(+). It functions in the pathway protein modification; protein lipoylation via endogenous pathway; protein N(6)-(lipoyl)lysine from octanoyl-[acyl-carrier-protein]. Functionally, catalyzes the transfer of endogenously produced octanoic acid from octanoyl-acyl-carrier-protein onto the lipoyl domain of GcvH, an intermediate carrier during protein lipoylation. This chain is Octanoyltransferase LipM, found in Exiguobacterium sibiricum (strain DSM 17290 / CCUG 55495 / CIP 109462 / JCM 13490 / 255-15).